We begin with the raw amino-acid sequence, 301 residues long: GTPase Era (301 aa).

The 170-residue stretch at 11-180 (RSGIITLVGR…KDVFFENCLN (170 aa)) folds into the Era-type G domain. A G1 region spans residues 19 to 26 (GRPNVGKS). 19–26 (GRPNVGKS) lines the GTP pocket. The interval 45 to 49 (QTTRR) is G2. The G3 stretch occupies residues 66–69 (DTPG). GTP contacts are provided by residues 66 to 70 (DTPGI) and 129 to 132 (TKID). Residues 129 to 132 (TKID) are G4. The tract at residues 159–161 (VSA) is G5. A KH type-2 domain is found at 210 to 286 (LEQEIPHSLL…YLRLIVKVVK (77 aa)).

It belongs to the TRAFAC class TrmE-Era-EngA-EngB-Septin-like GTPase superfamily. Era GTPase family. Monomer.

It localises to the cytoplasm. The protein localises to the cell membrane. Its function is as follows. An essential GTPase that binds both GDP and GTP, with rapid nucleotide exchange. Plays a role in 16S rRNA processing and 30S ribosomal subunit biogenesis and possibly also in cell cycle regulation and energy metabolism. The polypeptide is GTPase Era (Tropheryma whipplei (strain TW08/27) (Whipple's bacillus)).